The sequence spans 197 residues: UPF0200 protein MJ1399 (197 aa).

8 to 15 (GMPGAGKS) contacts ATP.

It belongs to the UPF0200 family.

In Methanocaldococcus jannaschii (strain ATCC 43067 / DSM 2661 / JAL-1 / JCM 10045 / NBRC 100440) (Methanococcus jannaschii), this protein is UPF0200 protein MJ1399.